A 715-amino-acid chain; its full sequence is Macrolide export ATP-binding/permease protein MacB (715 aa).

The region spanning 4-245 (IELQDIRKTY…VSKAAPAQSK (242 aa)) is the ABC transporter domain. 40-47 (GTSGSGKT) is an ATP binding site. Residues 229–251 (AVGDMPQVSKAAPAQSKPVHSAM) form a disordered region. The next 4 membrane-spanning stretches (helical) occupy residues 277–297 (AALT…MMEI), 592–612 (LLLA…MNIM), 639–659 (QFLF…ILVG), and 681–701 (ILAA…YPAW).

Belongs to the ABC transporter superfamily. Macrolide exporter (TC 3.A.1.122) family. As to quaternary structure, homodimer.

The protein resides in the cell inner membrane. In terms of biological role, non-canonical ABC transporter that contains transmembrane domains (TMD), which form a pore in the inner membrane, and an ATP-binding domain (NBD), which is responsible for energy generation. Confers resistance against macrolides. The chain is Macrolide export ATP-binding/permease protein MacB from Syntrophobacter fumaroxidans (strain DSM 10017 / MPOB).